The chain runs to 83 residues: Sulfur carrier protein TusA (83 aa).

Cysteine 19 (cysteine persulfide intermediate) is an active-site residue.

It belongs to the sulfur carrier protein TusA family.

It localises to the cytoplasm. Sulfur carrier protein which probably makes part of a sulfur-relay system. The polypeptide is Sulfur carrier protein TusA (Vibrio atlanticus (strain LGP32) (Vibrio splendidus (strain Mel32))).